A 114-amino-acid polypeptide reads, in one-letter code: Lectin MVL (114 aa).

Repeat 1 spans residues 2 to 55 (ASYKVNIPAGPLWSNAEAQQVGPKIAAAHQGNFTGQWTTVVESAMSVVEVELQV). Residues 12–16 (PLWSN), Q20, and 36–44 (GQWTTVVES) each bind a carbohydrate. The linker stretch occupies residues 56-60 (ENTGI). Repeat 2 spans residues 61–114 (HEFKTDVLAGPLWSNDEAQKLGPQIAASYGAEFTGQWRTIVEGVMSVIQIKYTF). A carbohydrate-binding positions include 71–75 (PLWSN), Q79, and 95–103 (GQWRTIVEG).

Homodimer.

The protein localises to the cytoplasm. Functionally, carbohydrate-binding protein that binds oligomannosides such as Man(6)GlcNAc(2) with sub-micromolar affinities. The specificity of MVL is unique in that its minimal target comprises the Man-alpha-(1-&gt;6)-Man-beta-(1-&gt;4)-GlcNAc-beta-(1-&gt;4)-GlcNAc tetrasaccharide core (Man(2)A) found in N-linked oligomannosides. Displays hemagglutininating activity on rabbit, horse and hen erythrocytes. This activity is inhibited by yeast mannan. Does not bind mono- and disaccharides. Inhibits HIV-1 envelope-mediated cell fusion at nanomolar concentrations through carbohydrate-mediated interactions with high-mannose residues on the surface of the HIV envelope glycoprotein gp120. In terms of biological role, unexpectedly for a lectin, one of the 2 oligomannose binding sites of MVL can catalyze the cleavage of chitin fragments (such as chitotriose, i.e. GlcNAc(3) or GlcNAc-beta-(1-&gt;4)-GlcNAcbeta-(1-&gt;4)-GlcNAc, and chitotetraose, i.e. GlcNAc(4)) to GlcNAc. This weak beta-1,4-glycosidase activity is restricted to the C-terminal carbohydrate-binding site. Does not cleave Man(3)GlcNAc(2) or the tetrasaccharide Man(2)A. The polypeptide is Lectin MVL (mvl) (Microcystis viridis (Polycystis viridis)).